Reading from the N-terminus, the 306-residue chain is MKENSNPENPESQEKNLSETPIPKITIICSAPDLASQNIKTQLLNLIEWKLLEIPENSEFSAARESQDGKFRLVDIEETHVFQDGLDRKLENAGLPASLIIFASKHRSKEEISSLTVHCTGNPSDDVRLGGCPKSLAVSSPAAMKSILVEMKRLAEQKGLKYDVTLEVTHHGPTELSVPSLYAEIGSTEVQWKDPEAGEVAAKAILAVSLVKVPVAVGFGGGHYAMRQTKLLFETGISFGHNFPKYKLEFVDEALIRQAIEKSKADFAYFDRKSMKSEERKKISKILENLGLSVLKESEIREKYGN.

Belongs to the DtdA deacylase family. In terms of assembly, monomer. Zn(2+) serves as cofactor.

It carries out the reaction a D-aminoacyl-tRNA + H2O = a tRNA + a D-alpha-amino acid + H(+). It catalyses the reaction glycyl-tRNA(Ala) + H2O = tRNA(Ala) + glycine + H(+). In terms of biological role, D-aminoacyl-tRNA deacylase with broad substrate specificity. By recycling D-aminoacyl-tRNA to D-amino acids and free tRNA molecules, this enzyme counteracts the toxicity associated with the formation of D-aminoacyl-tRNA entities in vivo. This chain is D-aminoacyl-tRNA deacylase, found in Methanosarcina barkeri (strain Fusaro / DSM 804).